The following is a 325-amino-acid chain: Pectinesterase A (325 aa).

The N-terminal stretch at 1 to 18 (MRVQSYLSLFSLVGAALC) is a signal peptide. Asn126 carries an N-linked (GlcNAc...) asparagine glycan. Substrate is bound at residue Gln143. The active-site Proton donor is Asp166. Asp187 functions as the Nucleophile in the catalytic mechanism. Substrate-binding residues include Arg247 and Trp249.

Belongs to the pectinesterase family.

It is found in the secreted. It catalyses the reaction [(1-&gt;4)-alpha-D-galacturonosyl methyl ester](n) + n H2O = [(1-&gt;4)-alpha-D-galacturonosyl](n) + n methanol + n H(+). Its pathway is glycan metabolism; pectin degradation; 2-dehydro-3-deoxy-D-gluconate from pectin: step 1/5. Involved in maceration and soft-rotting of plant tissue. Active against citrus pectin. The chain is Pectinesterase A (pmeA) from Emericella nidulans (strain FGSC A4 / ATCC 38163 / CBS 112.46 / NRRL 194 / M139) (Aspergillus nidulans).